Here is a 1582-residue protein sequence, read N- to C-terminus: Dynein axonemal assembly factor 1 homolog (1582 aa).

LRR repeat units follow at residues 38 to 60 (RLND…DEYT), 61 to 82 (ELKS…TKLT), 83 to 104 (KLKC…EFNR), 105 to 126 (ELDT…GTDI), 129 to 150 (VLNT…AALV), and 154 to 175 (TLSV…KIFE). Residues 189-227 (PVVSRLPQYRKTLILACKELTYLDSRPVFPRDRACAEAW) form the LRRCT domain. 11 disordered regions span residues 245 to 420 (AERR…SEMD), 560 to 587 (SSDV…VKSQ), 859 to 878 (FSKD…EDRR), 913 to 942 (DTGE…DDDA), 1073 to 1092 (SSNE…LVER), 1101 to 1137 (MQRM…MGEG), 1150 to 1218 (TEII…QAEG), 1305 to 1345 (KDNE…TAKD), 1358 to 1438 (LDPE…PYQT), 1484 to 1517 (EDSK…NPKN), and 1529 to 1548 (PSES…STEQ). Low complexity predominate over residues 313-327 (ESQASEHSTTSSTSA). Residues 339–392 (HIAERISNRRVKPLEGRPKVLYDEAASGDEKAVTTTDSKKDSNAEDLPELKDIT) show a composition bias toward basic and acidic residues. Over residues 409–420 (TLLQSDSGSEMD) the composition is skewed to polar residues. Positions 572–582 (ESDEEPTEEEM) are enriched in acidic residues. A compositionally biased stretch (acidic residues) spans 928 to 942 (SDSESEKEVEEDDDA). Basic and acidic residues-rich tracts occupy residues 1078–1092 (LEAK…LVER) and 1103–1125 (RMKE…KEEE). The segment covering 1166 to 1178 (EGGAQQEEGGAQS) has biased composition (low complexity). Basic and acidic residues-rich tracts occupy residues 1321 to 1335 (PKEE…ETET), 1398 to 1427 (SALK…KDTE), and 1484 to 1514 (EDSK…RPEN). Over residues 1529 to 1540 (PSESLEDTEATE) the composition is skewed to acidic residues.

Belongs to the DNAAF1 family.

Its subcellular location is the cell projection. The protein localises to the cilium. Cilium-specific protein required for cilia structures. This Drosophila pseudoobscura pseudoobscura (Fruit fly) protein is Dynein axonemal assembly factor 1 homolog (dtr).